The chain runs to 230 residues: MEESRFDSEDVDYAEIVVVRHGETSWNAERKIQGHLDVELNDAGRQQAQRVAERLSKEQKISHVYSSDLKRAFETAQIIAAKCGKLEVLTDRDLRERHLGDMQGLVYQEASKIRPEAYKAFSSNRTDVDIPGGGESLDKLYDRCTTALQRIGDKHKGERIVVVTHGGVIRSLYERARPSARKVEKILNTSVNVFRLFDGDKWTIQVWGDVSHLEETGFLQSGFGGDRTSG.

The Tele-phosphohistidine intermediate role is filled by His21. The active-site Proton donor/acceptor is Glu96.

It belongs to the phosphoglycerate mutase family.

Its function is as follows. May play a role in carbohydrates metabolism. The polypeptide is Phosphoglycerate mutase-like protein 4 (Arabidopsis thaliana (Mouse-ear cress)).